A 515-amino-acid chain; its full sequence is Vacuolar fusion protein CCZ1 homolog A (515 aa).

Belongs to the CCZ1 family. Interacts with MON1.

Its subcellular location is the endosome. The protein resides in the prevacuolar compartment. Its function is as follows. Plays an important role in membrane trafficking through the secretory apparatus. In complex with MON1, acts as a guanine exchange factor (GEF) for RABG3F of the Rab7 protein family. Promotes the exchange of GDP to GTP, converting RABG3F from an inactive GDP-bound form into an active GTP-bound form. The RABG3F active form is involved in protein trafficking from prevacuolar compartments (PVCs) to vacuoles. May serve as a linker between Rab5 and Rab7 protein families in PVCs and mediate PVC maturation. This chain is Vacuolar fusion protein CCZ1 homolog A, found in Arabidopsis thaliana (Mouse-ear cress).